The primary structure comprises 133 residues: Protransforming growth factor alpha (133 aa).

The N-terminal stretch at M1–L23 is a signal peptide. Positions E24–A38 are cleaved as a propeptide — removed in mature form. At E24–Q97 the chain is on the extracellular side. A glycan (N-linked (GlcNAc...) asparagine) is linked at N25. The region spanning H42–E82 is the EGF-like domain. Intrachain disulfides connect C46–C59, C54–C70, and C72–C81. Residues V89–P133 constitute a propeptide, removed in mature form. A helical membrane pass occupies residues A98 to I120. Topologically, residues H121–P133 are cytoplasmic.

As to quaternary structure, interacts with the PDZ domains of MAGI3, SDCBP and SNTA1. The interaction with SDCBP, is required for the targeting to the cell surface. In the endoplasmic reticulum, in its immature form (i.e. with a prosegment and lacking full N-glycosylation), interacts with CNIH. In the Golgi apparatus, may form a complex with CNIH and GORASP2. Interacts (via cytoplasmic C-terminal domain) with NKD2. In terms of tissue distribution, skin.

It is found in the secreted. Its subcellular location is the extracellular space. The protein resides in the cell membrane. Functionally, TGF alpha is a mitogenic polypeptide that is able to bind to the EGF receptor/EGFR and to act synergistically with TGF beta to promote anchorage-independent cell proliferation in soft agar. This Ovis aries (Sheep) protein is Protransforming growth factor alpha (TGFA).